The primary structure comprises 88 residues: Large ribosomal subunit protein bL31B (88 aa).

The protein belongs to the bacterial ribosomal protein bL31 family. Type B subfamily. Part of the 50S ribosomal subunit.

The protein is Large ribosomal subunit protein bL31B of Bordetella bronchiseptica (strain ATCC BAA-588 / NCTC 13252 / RB50) (Alcaligenes bronchisepticus).